The sequence spans 346 residues: N-acetyl-gamma-glutamyl-phosphate reductase (346 aa).

Cys150 is an active-site residue.

Belongs to the NAGSA dehydrogenase family. Type 1 subfamily.

It localises to the cytoplasm. The enzyme catalyses N-acetyl-L-glutamate 5-semialdehyde + phosphate + NADP(+) = N-acetyl-L-glutamyl 5-phosphate + NADPH + H(+). It functions in the pathway amino-acid biosynthesis; L-arginine biosynthesis; N(2)-acetyl-L-ornithine from L-glutamate: step 3/4. Functionally, catalyzes the NADPH-dependent reduction of N-acetyl-5-glutamyl phosphate to yield N-acetyl-L-glutamate 5-semialdehyde. This is N-acetyl-gamma-glutamyl-phosphate reductase from Lachnoclostridium phytofermentans (strain ATCC 700394 / DSM 18823 / ISDg) (Clostridium phytofermentans).